The sequence spans 348 residues: N-(sulfonatooxy)prop-2-enimidothioate sulfolyase (348 aa).

Kelch repeat units lie at residues 1–33 (MART…VIGD), 34–85 (KLYC…VAVG), 87–133 (KLYV…FHSM), 139–194 (HVYV…VVQG), 209–254 (KIPT…FAHA), 259–314 (YIII…ASTT), and 322–348 (GLLV…NSST). A (Z)-N-(sulfonatooxy)alkanimidothioate-binding residues include Glu-46, Arg-94, Thr-129, Phe-130, and Arg-157. Arg-94 (proton donor) is an active-site residue. Arg-157 functions as the Proton donor in the catalytic mechanism. Glu-220 functions as the Proton acceptor in the catalytic mechanism. Glu-266 is a Fe(2+) binding site. Arg-269 lines the a (Z)-N-(sulfonatooxy)alkanimidothioate pocket. Positions 270 and 274 each coordinate Fe(2+). Residues Trp-309 and Val-310 each contribute to the a (Z)-N-(sulfonatooxy)alkanimidothioate site.

As to quaternary structure, homodimer. Requires Fe(2+) as cofactor. In terms of tissue distribution, expressed constitutively in roots, stems, leaves, flowers, siliques and seedlings.

The catalysed reaction is (Z)-N-(sulfonatooxy)prop-2-enimidothioate = allyl thiocyanate + sulfate. The enzyme catalyses (Z)-N-(sulfonatooxy)prop-2-enimidothioate = 2-(thiiran-2-yl)acetonitrile + sulfate. It carries out the reaction (Z)-N-(sulfonatooxy)prop-2-enimidothioate = allyl isothiocyanate + sulfate. It catalyses the reaction (Z)-phenyl-N-(sulfonatooxy)methanimidothioate = phenylacetonitrile + sulfur + sulfate. The catalysed reaction is glucoerucin + H2O = (Z)-4-methylsulfanylbutyl-N-(sulfonatooxy)methanimidothioate + D-glucose. The enzyme catalyses (Z)-4-methylsulfanylbutyl-N-(sulfonatooxy)methanimidothioate = 5-(methylsulfanyl)pentanenitrile + sulfur + sulfate + H(+). Its activity is regulated as follows. Stimulated by the presence of Fe(2+) leading to an increase formation of both thiocyanate and epithionitrile with allylglucosinolate as substrate in the presence of myrosinase. Repressed by EDTA. Its function is as follows. Specifier protein that contributes to constitutive and herbivore-induced simple nitrile formation. Catalyzes allylthiocyanate and corresponding epithionitrile formation from allylglucosinolate in the presence of myrosinase. Also converts aliphatic glucosinolates, such as indol-3-ylmethylglucosinolate, 4-methylsulfinylbutylglucosinolate, 4-methylthiobutyl- and benzylisothiocyanate, to simple nitriles. The protein is N-(sulfonatooxy)prop-2-enimidothioate sulfolyase of Thlaspi arvense (Field penny-cress).